Consider the following 238-residue polypeptide: Phosphoglycolate phosphatase (238 aa).

The active-site Nucleophile is aspartate 8. The Mg(2+) site is built by aspartate 8 and aspartate 10. A substrate-binding site is contributed by lysine 163. Mg(2+) is bound by residues aspartate 186 and aspartate 190.

It belongs to the archaeal SPP-like hydrolase family. It depends on Mg(2+) as a cofactor.

The catalysed reaction is 2-phosphoglycolate + H2O = glycolate + phosphate. Catalyzes the dephosphorylation of 2-phosphoglycolate. The protein is Phosphoglycolate phosphatase of Staphylothermus marinus (strain ATCC 43588 / DSM 3639 / JCM 9404 / F1).